Reading from the N-terminus, the 767-residue chain is Protein ROLLING AND ERECT LEAF 2 (767 aa).

Disordered stretches follow at residues M1–R20, P78–F187, and R201–V309. Composition is skewed to pro residues over residues A81–S90 and A110–V126. Low complexity predominate over residues S145 to S155. Residues R201–R210 are compositionally biased toward basic and acidic residues. Residues E221–E232 are compositionally biased toward acidic residues. The span at T255 to N264 shows a compositional bias: basic and acidic residues.

In terms of tissue distribution, highly expressed in young leaves and panicles. Expressed at low levels in roots.

The protein resides in the cell membrane. Its function is as follows. Involved in the regulation of leaf shape formation. May function by coordinating the expression of genes associated with leaf and bulliform cell development. This chain is Protein ROLLING AND ERECT LEAF 2, found in Oryza sativa subsp. japonica (Rice).